The sequence spans 158 residues: Trafficking protein particle complex subunit 6B (158 aa).

Belongs to the TRAPP small subunits family. BET3 subfamily. Homodimer. Part of a TRAPP complex. Heterodimer with TRAPPC3. The heterodimer TRAPPC6B-TRAPPC3 interacts with TRAPPC1 likely providing a core for TRAPP complex formation.

The protein resides in the golgi apparatus. It localises to the cis-Golgi network. Its subcellular location is the endoplasmic reticulum. Its function is as follows. Component of a transport protein particle (TRAPP) complex that may function in specific stages of inter-organelle traffic. Specifically involved in the early development of neural circuitry, likely by controlling the frequency and amplitude of intracellular calcium transients implicated in the regulation of neuron differentiation and survival. The polypeptide is Trafficking protein particle complex subunit 6B (Bos taurus (Bovine)).